Consider the following 735-residue polypeptide: Protostadienol synthase helA (735 aa).

The PFTB 1 repeat unit spans residues 132–173 (KQEMCRYLLNVVNEDGGWGLFIQSPSTVFGTVMNYCMLRILG). The Proton donor role is filled by D463. PFTB repeat units lie at residues 490–531 (LQQA…YENV), 567–607 (LSRS…ACMG), and 616–663 (CQRA…AVIG).

Belongs to the terpene cyclase/mutase family.

It carries out the reaction (S)-2,3-epoxysqualene = (17Z)-protosta-17(20),24-dien-3beta-ol. It functions in the pathway mycotoxin biosynthesis. Functionally, protostadienol synthase; part of the gene cluster that mediates the biosynthesis of helvolic acid, an antibacterial nortriterpenoid. Protostadienol synthase helA cyclizes (3S)-oxidosqualene to (17Z)-protosta-17(20),24-dien-3-beta-ol (protostadienol). The synthesis of protostadienol is followed by several steps of monooxygenation, dehydrogenation, and acyl transfer to yield the final helvolic acid. Following the cyclization to the tetracyclic protostadienol by helA, cytochrome P450 monooxygenases helB1-mediated and helB2-mediated oxidation at C-4 and C-16, acyltransferase helD2-dependent acetylation of 16-OH, oxidation of C-21 by cytochrome P450 monooxygenase helB4, and short chain dehydrogenase helC-dependent oxidative decarboxylation yield the fusidane skeleton. This intermediate is further modified in three additional steps mediated by the cytochrome P450 monooxygenase helB3, the acyltransferase helD1, and the 3-ketosteroid 1-dehydrogenase helE to give helvolic acid. Compared with the late stages in the biosynthesis of helvolic acid, enzymes involved in the early stage modifications act in a relatively strict order. The hydroxylation of C-16 by helB1 and subsequent acetylation by helD2 should occur before the helB3-mediated oxidation of C-21. C-4 demethylation in fusidane-type antibiotics proceeds in an unusual manner though it is also achieved by oxidative decarboxylation. The methyl group at C-4 beta position is oxidized by helB1 and subsequently removed by the short chain dehydrogenase helC. This is Protostadienol synthase helA from Aspergillus fumigatus (strain ATCC MYA-4609 / CBS 101355 / FGSC A1100 / Af293) (Neosartorya fumigata).